Reading from the N-terminus, the 804-residue chain is Probable exo-1,4-beta-xylosidase xlnD (804 aa).

Residues 1–17 (MAVAALALLALLPQALG) form the signal peptide. N-linked (GlcNAc...) asparagine glycans are attached at residues Asn-20, Asn-115, Asn-139, Asn-234, and Asn-243. Asp-307 is an active-site residue. N-linked (GlcNAc...) asparagine glycosylation is found at Asn-349, Asn-382, Asn-404, Asn-433, Asn-444, Asn-485, Asn-489, Asn-621, Asn-652, Asn-666, Asn-688, and Asn-710.

It belongs to the glycosyl hydrolase 3 family.

It localises to the secreted. The enzyme catalyses Hydrolysis of (1-&gt;4)-beta-D-xylans, to remove successive D-xylose residues from the non-reducing termini.. It functions in the pathway glycan degradation; xylan degradation. Xylan 1,4-beta-xylosidase involved in the hydrolysis of xylan, a major structural heterogeneous polysaccharide found in plant biomass representing the second most abundant polysaccharide in the biosphere, after cellulose. The sequence is that of Probable exo-1,4-beta-xylosidase xlnD (xlnD) from Aspergillus japonicus.